The chain runs to 70 residues: Large ribosomal subunit protein bL32 (70 aa).

A compositionally biased stretch (basic residues) spans 1–19; it reads MAVPKKKTSPSRRGMRRSH. Residues 1–21 are disordered; that stretch reads MAVPKKKTSPSRRGMRRSHQA.

This sequence belongs to the bacterial ribosomal protein bL32 family.

This is Large ribosomal subunit protein bL32 from Granulibacter bethesdensis (strain ATCC BAA-1260 / CGDNIH1).